The following is a 329-amino-acid chain: Alpha-tubulin N-acetyltransferase 1 (329 aa).

The region spanning 5-185 (SQVALLPKLS…NNFVVFHRYF (181 aa)) is the N-acetyltransferase domain. Acetyl-CoA-binding positions include 119–132 (FFVDTSFQRKGFGK) and 155–164 (SVKFLAFLQK). Disordered regions lie at residues 218–261 (PKYQ…GVGK) and 306–329 (GARRRMSPTRSGVQYNIISGTPEH). The segment covering 220 to 229 (YQSTTGPNNN) has biased composition (polar residues). Over residues 238–249 (TPPPPPLPPPLV) the composition is skewed to pro residues. Over residues 313–329 (PTRSGVQYNIISGTPEH) the composition is skewed to polar residues.

This sequence belongs to the acetyltransferase ATAT1 family.

The enzyme catalyses L-lysyl-[alpha-tubulin] + acetyl-CoA = N(6)-acetyl-L-lysyl-[alpha-tubulin] + CoA + H(+). Functionally, specifically acetylates 'Lys-40' in alpha-tubulin on the lumenal side of microtubules. Promotes microtubule destabilization and accelerates microtubule dynamics; this activity may be independent of acetylation activity. Acetylates alpha-tubulin with a slow enzymatic rate, due to a catalytic site that is not optimized for acetyl transfer. Enters the microtubule through each end and diffuses quickly throughout the lumen of microtubules. Acetylates only long/old microtubules because of its slow acetylation rate since it does not have time to act on dynamically unstable microtubules before the enzyme is released. This Trypanosoma cruzi (strain CL Brener) protein is Alpha-tubulin N-acetyltransferase 1.